We begin with the raw amino-acid sequence, 150 residues long: Endoribonuclease YbeY (150 aa).

His-102, His-106, and His-112 together coordinate Zn(2+).

Belongs to the endoribonuclease YbeY family. It depends on Zn(2+) as a cofactor.

The protein localises to the cytoplasm. Single strand-specific metallo-endoribonuclease involved in late-stage 70S ribosome quality control and in maturation of the 3' terminus of the 16S rRNA. The sequence is that of Endoribonuclease YbeY from Thermotoga maritima (strain ATCC 43589 / DSM 3109 / JCM 10099 / NBRC 100826 / MSB8).